The primary structure comprises 211 residues: Ribonuclease HII (211 aa).

The region spanning 2–211 (MLILGVDEAG…TAQRLKASSV (210 aa)) is the RNase H type-2 domain. The a divalent metal cation site is built by D8, E9, and D106.

Belongs to the RNase HII family. The cofactor is Mn(2+). It depends on Mg(2+) as a cofactor.

The protein resides in the cytoplasm. The catalysed reaction is Endonucleolytic cleavage to 5'-phosphomonoester.. Its function is as follows. Endonuclease that specifically degrades the RNA of RNA-DNA hybrids. In Methanothrix thermoacetophila (strain DSM 6194 / JCM 14653 / NBRC 101360 / PT) (Methanosaeta thermophila), this protein is Ribonuclease HII.